The sequence spans 180 residues: NADH-quinone oxidoreductase subunit I (180 aa).

4Fe-4S ferredoxin-type domains lie at 48–80 (IVLT…LQKA) and 90–119 (EFFR…LTPD). [4Fe-4S] cluster is bound by residues C60, C63, C66, C70, C99, C102, C105, and C109.

Belongs to the complex I 23 kDa subunit family. In terms of assembly, NDH-1 is composed of 13 different subunits. Subunits NuoA, H, J, K, L, M, N constitute the membrane sector of the complex. It depends on [4Fe-4S] cluster as a cofactor.

The protein localises to the cell inner membrane. It catalyses the reaction a quinone + NADH + 5 H(+)(in) = a quinol + NAD(+) + 4 H(+)(out). Functionally, NDH-1 shuttles electrons from NADH, via FMN and iron-sulfur (Fe-S) centers, to quinones in the respiratory chain. The immediate electron acceptor for the enzyme in this species is believed to be ubiquinone. Couples the redox reaction to proton translocation (for every two electrons transferred, four hydrogen ions are translocated across the cytoplasmic membrane), and thus conserves the redox energy in a proton gradient. The chain is NADH-quinone oxidoreductase subunit I from Cronobacter sakazakii (strain ATCC BAA-894) (Enterobacter sakazakii).